A 209-amino-acid polypeptide reads, in one-letter code: Ribosomal RNA large subunit methyltransferase E (209 aa).

The S-adenosyl-L-methionine site is built by Gly-63, Trp-65, Asp-83, Asp-99, and Asp-124. Lys-164 serves as the catalytic Proton acceptor. A TRAM domain is found at 191 to 209 (EASRGRSREVYIVATGYKG).

Belongs to the class I-like SAM-binding methyltransferase superfamily. RNA methyltransferase RlmE family.

The protein resides in the cytoplasm. It carries out the reaction uridine(2552) in 23S rRNA + S-adenosyl-L-methionine = 2'-O-methyluridine(2552) in 23S rRNA + S-adenosyl-L-homocysteine + H(+). Its function is as follows. Specifically methylates the uridine in position 2552 of 23S rRNA at the 2'-O position of the ribose in the fully assembled 50S ribosomal subunit. In Haemophilus influenzae (strain 86-028NP), this protein is Ribosomal RNA large subunit methyltransferase E.